Here is a 176-residue protein sequence, read N- to C-terminus: NAD(P)H-quinone oxidoreductase subunit 6, chloroplastic (176 aa).

Helical transmembrane passes span 10–30 (FLLV…VLLT), 32–52 (PIFS…FYIL), 63–83 (LLIY…FMNS), 92–112 (LWTV…VSLV), and 152–172 (FFLP…GTIV).

Belongs to the complex I subunit 6 family. In terms of assembly, NDH is composed of at least 16 different subunits, 5 of which are encoded in the nucleus.

Its subcellular location is the plastid. It is found in the chloroplast thylakoid membrane. It catalyses the reaction a plastoquinone + NADH + (n+1) H(+)(in) = a plastoquinol + NAD(+) + n H(+)(out). It carries out the reaction a plastoquinone + NADPH + (n+1) H(+)(in) = a plastoquinol + NADP(+) + n H(+)(out). Its function is as follows. NDH shuttles electrons from NAD(P)H:plastoquinone, via FMN and iron-sulfur (Fe-S) centers, to quinones in the photosynthetic chain and possibly in a chloroplast respiratory chain. The immediate electron acceptor for the enzyme in this species is believed to be plastoquinone. Couples the redox reaction to proton translocation, and thus conserves the redox energy in a proton gradient. The polypeptide is NAD(P)H-quinone oxidoreductase subunit 6, chloroplastic (ndhG) (Cicer arietinum (Chickpea)).